The sequence spans 45 residues: Large ribosomal subunit protein bL34 (45 aa).

A disordered region spans residues 1–45 (MTKRTFQPNNRRRARKHGFRARMRTRAGRAILSARRGKNRAELSA). Residues 10 to 27 (NRRRARKHGFRARMRTRA) show a composition bias toward basic residues.

This sequence belongs to the bacterial ribosomal protein bL34 family.

This Micrococcus luteus (strain ATCC 4698 / DSM 20030 / JCM 1464 / CCM 169 / CCUG 5858 / IAM 1056 / NBRC 3333 / NCIMB 9278 / NCTC 2665 / VKM Ac-2230) (Micrococcus lysodeikticus) protein is Large ribosomal subunit protein bL34.